We begin with the raw amino-acid sequence, 432 residues long: Trigger factor (432 aa).

Residues Glu-161 to Pro-246 form the PPIase FKBP-type domain.

It belongs to the FKBP-type PPIase family. Tig subfamily.

It localises to the cytoplasm. It catalyses the reaction [protein]-peptidylproline (omega=180) = [protein]-peptidylproline (omega=0). Functionally, involved in protein export. Acts as a chaperone by maintaining the newly synthesized protein in an open conformation. Functions as a peptidyl-prolyl cis-trans isomerase. The sequence is that of Trigger factor from Salmonella schwarzengrund (strain CVM19633).